Consider the following 303-residue polypeptide: Acetaldehyde dehydrogenase (303 aa).

Cysteine 130 acts as the Acyl-thioester intermediate in catalysis. NAD(+) is bound by residues 161 to 169 (SVGPGTRKN) and asparagine 272.

Belongs to the acetaldehyde dehydrogenase family.

The catalysed reaction is acetaldehyde + NAD(+) + CoA = acetyl-CoA + NADH + H(+). The polypeptide is Acetaldehyde dehydrogenase (Verminephrobacter eiseniae (strain EF01-2)).